A 364-amino-acid polypeptide reads, in one-letter code: Protein RecA (364 aa).

77-84 (GPESSGKT) is an ATP binding site. The segment at 343–364 (DRFLQNGGPDPDDGDGDATAEM) is disordered. The span at 352 to 364 (DPDDGDGDATAEM) shows a compositional bias: acidic residues.

It belongs to the RecA family.

Its subcellular location is the cytoplasm. In terms of biological role, can catalyze the hydrolysis of ATP in the presence of single-stranded DNA, the ATP-dependent uptake of single-stranded DNA by duplex DNA, and the ATP-dependent hybridization of homologous single-stranded DNAs. It interacts with LexA causing its activation and leading to its autocatalytic cleavage. The sequence is that of Protein RecA from Rhizobium johnstonii (strain DSM 114642 / LMG 32736 / 3841) (Rhizobium leguminosarum bv. viciae).